The chain runs to 418 residues: MKLESQFLSFLYSRGYFNQCTNVSALDQLMSKQCVPTYIGFDCTAKSLHVGSLVQIMILRYLQKFGHKPIVLLGNGTTKIGDPSGKDKSRTMLCSDEIEENALGIYDVLKKFIKFGSGSTDGLLVCNAEWLDDLNYIEFLRNIGRHFSVNNMLTFDSVRLRLEREQNLSFLEFNYMLLQSYDFVELNRRYNCLLQIGGSDQWGNIVSGVELGRKLQLSELFGLTTNLVLTSSGEKMGKTAQGAVWLNGDMYSPVDYWQYFRNVRDEDVGRFLKLFTELPLDKIKELELLQGHEINEAKKMLATEATKICHGEEIAKNIAADALKVFECNDDSGLSTFYVDRCDVDLGLPIIKLLQISGLEKSSSSARRLINDKGCKINDVVVLDVNYKLSLEHFCNASYVKLSCGKKRHLKIMLKSSF.

Tyr-38 lines the L-tyrosine pocket. A 'HIGH' region motif is present at residues 43–52 (CTAKSLHVGS). L-tyrosine-binding residues include Tyr-175 and Gln-179. The 'KMSKS' region motif lies at 235–239 (KMGKT). Residue Lys-238 coordinates ATP. The S4 RNA-binding domain maps to 348 to 413 (LPIIKLLQIS…CGKKRHLKIM (66 aa)).

The protein belongs to the class-I aminoacyl-tRNA synthetase family. TyrS type 1 subfamily. As to quaternary structure, homodimer.

Its subcellular location is the cytoplasm. The enzyme catalyses tRNA(Tyr) + L-tyrosine + ATP = L-tyrosyl-tRNA(Tyr) + AMP + diphosphate + H(+). Catalyzes the attachment of tyrosine to tRNA(Tyr) in a two-step reaction: tyrosine is first activated by ATP to form Tyr-AMP and then transferred to the acceptor end of tRNA(Tyr). The protein is Tyrosine--tRNA ligase of Ehrlichia canis (strain Jake).